A 369-amino-acid chain; its full sequence is MSYQSILLRQVNSLCDNLEEVARDENGGLIDMAMQSDYFTFDVMSEVIFGMAYNALKDTSYRFVTGALGSSNIRIGTLVQSPLPAMCRIDKYLFPESIQGRNKFLGFIGSLLRDRSKASFAGNGNVFSFLETAKDPDGGNQLSKSEIRAECATLVAAGTDTSSSTLAATLFYLSRNSKCYSRVSEEVRNAFSSHQDIKIGPELNSCVYLRACIEETLRMSPPVGAALWREIGPGGMNIGPLTLPAGVDVGTGIYSLHHNAAYHPEPFKYLPERWLVGEGSSTSESVELARSAFAPFSRGPRSCVGKGFAYHELTLTIAHILHRFDFSATEEDFALRHGSEGPGGINEFLLHDHVTGARSGPLLQFSMRR.

C303 contributes to the heme binding site.

Belongs to the cytochrome P450 family. It depends on heme as a cofactor.

It functions in the pathway secondary metabolite biosynthesis. Its function is as follows. Cytochrome P450 monooxygenase; part of the gene cluster that mediates the biosynthesis of the cyclic tetrapeptide apicidin F (APF). The non-ribosomal peptide synthetase apf1 incorporates four different amino acids to produce apicidin F: L-phenylalanine, D-pipecolic acid (D-pip), N-methoxy-L-tryptophan and L-2-aminooctanedioic acid. L-Phenylalanine is the only proteinogenic amino acid directly used by apf1. The 3 other apf1 substrates are non-proteinogenic and have to be modified by other enzymes of the cluster. Lysine is converted to delta-1-pyrroline-5-carboxylate (P5C) which is reduced to L-pipecolic acid (L-pip) by apf3. L-pip is epimerized to D-pip, probably by apf1 activity, prior to incorporation. L-Tryptophan is N-oxidyzed by one of the cytochrome P450 monooxygenases (apf7 or apf8), and further methylated at the hydroxy group by the O-methyltransferase apf6 to yield N-methoxy-L-tryptophan. The synthesis of the fourth apf1 substrate is more complex. The fatty acid synthase apf5 is involved in the synthesis of the octanoic acid backbone of L-2-aminooctanedioic acid by fixing one acetyl-CoA unit and three malonyl-CoA units. Then one of the cytochrome P450 monooxygenases (apf7 or apf8) may oxidize this backbone to 2-oxooctanoic acid. The aminotransferase apf4 is predicted to catalyze the exchange of the keto group with an amino group. The next step would be the oxidation of 2-aminooctanoic acid by one of the cytochrome P450 monooxygenases (apf7 or apf8). The last step is the oxidation of 2-amino-8-hydroxyoctanoic acid to 2-aminooctanedioic acid is catalyzed by the FAD-dependent monooxygenase apf9. In Gibberella fujikuroi (strain CBS 195.34 / IMI 58289 / NRRL A-6831) (Bakanae and foot rot disease fungus), this protein is Cytochrome P450 monooxygenase apf8.